We begin with the raw amino-acid sequence, 251 residues long: Meso-2,3-butanediol dehydrogenase (251 aa).

Residues N15, M17, D36, D60, V61, and N87 each coordinate NAD(+). S138, S140, and Y151 together coordinate (R)-acetoin. S138 is a binding site for (S)-acetoin. 4 residues coordinate NAD(+): Y151, K155, V184, and T186. Y151 serves as a coordination point for (S)-acetoin. The active-site Proton acceptor is the Y151.

It belongs to the short-chain dehydrogenases/reductases (SDR) family. In terms of assembly, homotetramer; dimer of dimers.

It carries out the reaction (R,S)-butane-2,3-diol + NAD(+) = (R)-acetoin + NADH + H(+). The enzyme catalyses (S,S)-butane-2,3-diol + NAD(+) = (S)-acetoin + NADH + H(+). It catalyses the reaction (S)-acetoin + NAD(+) = diacetyl + NADH + H(+). Its activity is regulated as follows. Oxidation of meso-2,3-butanediol is enhanced in the presence of Fe(2+). Reduction of diacetyl and (3S/3R)-acetoin is slightly enhanced in the presence of Mg(2+) and Mn(2+). Activity is inhibited by several metal ions, particularly Fe(3+) for reduction of diacetyl and acetoin. Functionally, catalyzes the NAD-dependent oxidation of meso-2,3-butanediol to (3R)-acetoin, and of (2S,3S)-2,3-butanediol to (3S)-acetoin, with much lower efficiency. Can also oxidize several primary alcohols such as glycerol, 1-2-pentanediol and 1,2-propanediol, with lower activity. Cannot use (2R,3R)-2,3-butanediol. In the presence of NADH, catalyzes the reduction of (3R)-acetoin to meso-2,3-butanediol, of (3S)-acetoin to (2S,3S)-2,3-butanediol and of diacetyl to (3S)-acetoin. No activity is detected with NADPH/NADP(+). The protein is Meso-2,3-butanediol dehydrogenase of Serratia marcescens.